A 457-amino-acid chain; its full sequence is NADP-specific glutamate dehydrogenase (457 aa).

Residue lysine 113 is part of the active site.

Belongs to the Glu/Leu/Phe/Val dehydrogenases family. As to quaternary structure, homohexamer.

It carries out the reaction L-glutamate + NADP(+) + H2O = 2-oxoglutarate + NH4(+) + NADPH + H(+). The protein is NADP-specific glutamate dehydrogenase (GDH) of Tuber borchii (White truffle).